A 743-amino-acid chain; its full sequence is Dystrobrevin alpha (743 aa).

The interval Met1 to Glu288 is interaction with MAGEE1. The ZZ-type zinc finger occupies Phe238–Ser294. Zn(2+)-binding residues include Cys243, Cys246, Cys258, Cys261, Cys267, Cys270, His280, and His284. Residues Asp400 to Ser450 are syntrophin-binding region. The stretch at Asp461–Gln556 forms a coiled coil. Residues Gln556–Met575 form a disordered region. A compositionally biased stretch (polar residues) spans Gly557–Ile569. Ser662 is modified (phosphoserine).

It belongs to the dystrophin family. Dystrobrevin subfamily. In terms of assembly, interacts with dystrophin, utrophin and the syntrophins SNTA1, SNTB1, SNTB2, SNTG1 and SNTG2. Interacts with MAGEE1. Binds dystrobrevin binding protein 1. Interacts with CTNNAL1. The interaction is required for correct localization of both CTNNAL1 and DTNA. Does not interact with dystrophin. Phosphorylation of DTN-1 on tyrosine kinase substrate domain present in the C-terminus. As to expression, highly expressed in brain, skeletal and cardiac muscles, and expressed at lower levels in lung, liver and pancreas. Isoform 2 is not expressed in cardiac muscle. Isoform 7 and isoform 8 are only expressed in muscle.

It is found in the cytoplasm. The protein resides in the synapse. It localises to the cell membrane. In terms of biological role, may be involved in the formation and stability of synapses as well as being involved in the clustering of nicotinic acetylcholine receptors. This is Dystrobrevin alpha from Homo sapiens (Human).